The sequence spans 353 residues: Alanine racemase (353 aa).

Lysine 33 (proton acceptor; specific for D-alanine) is an active-site residue. Position 33 is an N6-(pyridoxal phosphate)lysine (lysine 33). Arginine 129 provides a ligand contact to substrate. Tyrosine 250 (proton acceptor; specific for L-alanine) is an active-site residue. Methionine 298 is a substrate binding site.

This sequence belongs to the alanine racemase family. Pyridoxal 5'-phosphate is required as a cofactor.

It catalyses the reaction L-alanine = D-alanine. It functions in the pathway amino-acid biosynthesis; D-alanine biosynthesis; D-alanine from L-alanine: step 1/1. Its function is as follows. Catalyzes the interconversion of L-alanine and D-alanine. May also act on other amino acids. The sequence is that of Alanine racemase (alr) from Azoarcus sp. (strain BH72).